A 1035-amino-acid polypeptide reads, in one-letter code: FERM domain-containing protein 4B (1035 aa).

The FERM domain maps to 59–361; it reads RHCQVHLLDD…SQHQFYLDRK (303 aa). A Phosphoserine modification is found at Ser372. Coiled-coil stretches lie at residues 414-451 and 535-559; these read QDSE…LKKI and KQDY…RIRC. The necessary for adherens junction and tight junction localization stretch occupies residues 542-972; that stretch reads VKRLQEIENS…TQLTIGLSEY (431 aa). Disordered regions lie at residues 563 to 615, 631 to 699, 713 to 738, and 754 to 798; these read PSQK…ILPP, NEQF…LESQ, FTLS…SQSS, and TQTL…SKGQ. Residues 571–590 are compositionally biased toward low complexity; the sequence is PPEDIIPSESSSLSDTTTYD. Residues 594-607 show a composition bias toward polar residues; that stretch reads DSFTLAGQRPSSVP. Ser609 is modified (phosphoserine). Basic and acidic residues predominate over residues 635 to 644; the sequence is MDTRHSREML. Composition is skewed to polar residues over residues 664–699 and 715–725; these read MPTT…LESQ and LSKSQRSSSTE. Phosphoserine is present on Ser698. Residues 762–771 are compositionally biased toward basic residues; it reads RGRRRSKKHS. Polar residues predominate over residues 772 to 782; the sequence is VSTSNSGSMPN. A Glycyl lysine isopeptide (Lys-Gly) (interchain with G-Cter in SUMO2) cross-link involves residue Lys883. Disordered regions lie at residues 906–926, 939–958, and 994–1035; these read RASG…SDRG, PCSP…TNAS, and PSRQ…GTLV. A compositionally biased stretch (polar residues) spans 907–921; the sequence is ASGQKDQGHSPQTSF. Phosphoserine is present on Ser916. The segment covering 941-958 has biased composition (low complexity); it reads SPSSRASSYSSVSSTNAS. A compositionally biased stretch (basic and acidic residues) spans 1019–1035; it reads SEQRLFWHEDSKPGTLV. Lys1030 participates in a covalent cross-link: Glycyl lysine isopeptide (Lys-Gly) (interchain with G-Cter in SUMO2).

In terms of assembly, interacts with CYTH3. Interacts with PARD3. Interacts with CYTH1. Isoform 1 is expressed in the brain. Isoform 2 is expressed in the lung (at protein level).

The protein resides in the cytoplasm. Its subcellular location is the cytoskeleton. The protein localises to the cell junction. It localises to the tight junction. It is found in the adherens junction. Member of GRP1 signaling complexes that are acutely recruited to plasma membrane ruffles in response to insulin receptor signaling. May function as a scaffolding protein that regulates epithelial cell polarity by connecting ARF6 activation with the PAR3 complex. Plays a redundant role with FRMD4A in epithelial polarization. The protein is FERM domain-containing protein 4B (Frmd4b) of Mus musculus (Mouse).